Consider the following 319-residue polypeptide: rRNA adenine N-6-methyltransferase (319 aa).

The disordered stretch occupies residues 1 to 59; it reads MARAPRSPHPARSRETSRAHPPYGTRADRAPGRGRDRDRSPDSPGNTSSRDGGRSPDRA. Basic and acidic residues predominate over residues 26 to 41; the sequence is RADRAPGRGRDRDRSP. Asparagine 66, leucine 68, glycine 93, glutamate 114, aspartate 141, and asparagine 157 together coordinate S-adenosyl-L-methionine.

The protein belongs to the class I-like SAM-binding methyltransferase superfamily. rRNA adenine N(6)-methyltransferase family.

The enzyme catalyses adenosine(2085) in 23S rRNA + 2 S-adenosyl-L-methionine = N(6)-dimethyladenosine(2085) in 23S rRNA + 2 S-adenosyl-L-homocysteine + 2 H(+). This protein produces a dimethylation of the adenine residue at position 2085 in 23S rRNA, resulting in reduced affinity between ribosomes and macrolide-lincosamide-streptogramin B antibiotics. This chain is rRNA adenine N-6-methyltransferase (ermSF), found in Streptomyces fradiae (Streptomyces roseoflavus).